An 823-amino-acid chain; its full sequence is Aminopeptidase O (823 aa).

Residue H481 coordinates Zn(2+). The active-site Proton acceptor is the E482. Zn(2+) is bound by residues H485 and E504. The short motif at 693-703 is the Nucleolar localization signal element; the sequence is RRPRKRKRGKR.

This sequence belongs to the peptidase M1 family. Requires Zn(2+) as cofactor. As to expression, expressed in testis, heart, brain, lung, liver, skeletal muscle, kidney and ovary. Expressed in vascular tissues.

Its subcellular location is the nucleus. The protein localises to the nucleolus. The protein resides in the cytoplasm. Aminopeptidase which catalyzes the hydrolysis of amino acid residues from the N-terminus of peptide or protein substrates. The protein is Aminopeptidase O (Aopep) of Mus musculus (Mouse).